Reading from the N-terminus, the 643-residue chain is MEDSEGTDGTEEDGCRAGGWFHVEAIITHGQRQVSSDEDEDETETGEDLDFIDNRVPGDGQEIPLQLYAQQTAQDDEATVQALKRKFVASPLSACSCIENDLSPRLDAISLNRKSEKAKRRLFETEPPDSGYGNTQMVVGTPEEVTGDEESQGGRPVEDQEEERQGGDGEADLTVHTPQSGTDAAGSVLTLLRSSNLKATLLSKFKDLFGVGFYELVRQFKSSKTACADWVVCAYGVYYAVAEGLKKLIQPHTQYAHIQVQTSSWGMVVFMLLRYNCAKNRDSVSKNMSMLLNIPEKHMLIEPPKLRSTPAALYWYKTAMGNGSEVYGETPEWIVRQTLVGHSMEDEQFRLSVMVQYAYDHDIVEESVLAFEYAQLADVDANAAAFLNSNCQAKYVKDAVTMCRHYKRAEREQMSMSQWITFRGNKVSEEGDWKPIVRFLRHQGVEFVSFLAAFKLFLKGVPKKNCIVFYGPADTGKSYFCMSLLQFLGGAVISYANSSSHFWLQPLSDSKIGLLDDATPQCWSYIDIYLRNLLDGHPVSIDRKHKTLLQLKCPPLMITTNTNPLEEDRWKYLRSRLTVFTFKNPFPFASPGEPLYPINNANWKCFFQRSWSRLDLNSPEEQDDNGNTGEPFRCVPGDVARTV.

A disordered region spans residues 28 to 58 (THGQRQVSSDEDEDETETGEDLDFIDNRVPG). Acidic residues predominate over residues 36-51 (SDEDEDETETGEDLDF). A Nuclear localization signal motif is present at residues 84–86 (KRK). 2 positions are modified to phosphoserine; by host: Ser90 and Ser103. Positions 102-111 (LSPRLDAISL) match the Nuclear export signal motif. Disordered stretches follow at residues 119–138 (KRRL…TQMV) and 143–181 (EEVT…PQSG). The tract at residues 180 to 346 (SGTDAAGSVL…QTLVGHSMED (167 aa)) is DNA-binding region. Residues 445-595 (VEFVSFLAAF…FPFASPGEPL (151 aa)) form the SF3 helicase domain. 471–478 (GPADTGKS) serves as a coordination point for ATP. Residue Lys552 forms a Glycyl lysine isopeptide (Lys-Gly) (interchain with G-Cter in SUMO) linkage. A disordered region spans residues 617–643 (NSPEEQDDNGNTGEPFRCVPGDVARTV).

It belongs to the papillomaviridae E1 protein family. In terms of assembly, can form hexamers. Interacts with E2 protein; this interaction increases E1 DNA binding specificity. Interacts with host DNA polymerase subunit POLA2. Interacts with host single stranded DNA-binding protein RPA1. Interacts with host TOP1; this interaction stimulates the enzymatic activity of TOP1. Phosphorylated. Post-translationally, sumoylated.

The protein localises to the host nucleus. It carries out the reaction Couples ATP hydrolysis with the unwinding of duplex DNA by translocating in the 3'-5' direction.. The catalysed reaction is ATP + H2O = ADP + phosphate + H(+). Its function is as follows. ATP-dependent DNA 3'-5' helicase required for initiation of viral DNA replication. It forms a complex with the viral E2 protein. The E1-E2 complex binds to the replication origin which contains binding sites for both proteins. During the initial step, a dimer of E1 interacts with a dimer of protein E2 leading to a complex that binds the viral origin of replication with high specificity. Then, a second dimer of E1 displaces the E2 dimer in an ATP-dependent manner to form the E1 tetramer. Following this, two E1 monomers are added to each half of the site, which results in the formation of two E1 trimers on the viral ori. Subsequently, two hexamers will be created. The double hexamer acts as a bi-directional helicase machinery and unwinds the viral DNA and then recruits the host DNA polymerase to start replication. In Human papillomavirus type 2a, this protein is Replication protein E1.